The primary structure comprises 420 residues: Phosphoribosylamine--glycine ligase (420 aa).

One can recognise an ATP-grasp domain in the interval 108–314 (KQFMEKYAIP…FAALIDALLH (207 aa)). 134–195 (LDERGVPIVI…EDFLAGEEFS (62 aa)) contributes to the ATP binding site. The Mg(2+) site is built by Glu284 and Asn286.

It belongs to the GARS family. Mg(2+) serves as cofactor. The cofactor is Mn(2+).

The catalysed reaction is 5-phospho-beta-D-ribosylamine + glycine + ATP = N(1)-(5-phospho-beta-D-ribosyl)glycinamide + ADP + phosphate + H(+). The protein operates within purine metabolism; IMP biosynthesis via de novo pathway; N(1)-(5-phospho-D-ribosyl)glycinamide from 5-phospho-alpha-D-ribose 1-diphosphate: step 2/2. This chain is Phosphoribosylamine--glycine ligase, found in Listeria monocytogenes serotype 4b (strain F2365).